A 513-amino-acid polypeptide reads, in one-letter code: GMP synthase [glutamine-hydrolyzing] (513 aa).

Positions 8 to 198 constitute a Glutamine amidotransferase type-1 domain; that stretch reads KIIVLDYGSQ…ALNICGAKGN (191 aa). C85 serves as the catalytic Nucleophile. Active-site residues include H172 and E174. Residues 199 to 388 form the GMPS ATP-PPase domain; the sequence is WSMENFIDMQ…LGMPDEIVWR (190 aa). 226–232 is a binding site for ATP; that stretch reads SGGVDSS.

As to quaternary structure, homodimer.

It catalyses the reaction XMP + L-glutamine + ATP + H2O = GMP + L-glutamate + AMP + diphosphate + 2 H(+). It functions in the pathway purine metabolism; GMP biosynthesis; GMP from XMP (L-Gln route): step 1/1. In terms of biological role, catalyzes the synthesis of GMP from XMP. This chain is GMP synthase [glutamine-hydrolyzing] (guaA), found in Lactococcus lactis subsp. lactis (strain IL1403) (Streptococcus lactis).